The following is a 1000-amino-acid chain: Sop-2-related protein 1 (1000 aa).

Disordered regions lie at residues K355–Q374, H379–E422, and A466–G509. Residues S390–S404 show a composition bias toward low complexity. The segment covering A406–R415 has biased composition (basic and acidic residues). Residues G489–Q502 show a composition bias toward low complexity. The segment at R633–E720 is RNA-binding. Residues H948–T1000 are disordered. Residues N960 to A992 are compositionally biased toward low complexity.

Binds through its N-terminal region to the N-terminal region of sop-2.

Its subcellular location is the nucleus. In terms of biological role, acts synergistically with sop-2 to maintain the transcriptionally repressive state of homeotic genes throughout development. Not required to initiate repression, but to maintain it during later stages of development. Also required to repress expression of other genes. Binds RNA in a sequence-independent manner. The sequence is that of Sop-2-related protein 1 (sor-1) from Caenorhabditis elegans.